A 270-amino-acid polypeptide reads, in one-letter code: F420 non-reducing hydrogenase II cytochrome subunit (270 aa).

Transmembrane regions (helical) follow at residues 27–47, 57–77, 139–159, 173–193, and 195–215; these read AIAM…WEFM, MIAV…NIFS, ILIP…IVLY, WIIS…VGFL, and VLHL…VGIL.

The protein belongs to the HupC/HyaC/HydC family. In terms of assembly, composed of a large subunit (VhtA), a small subunit (VhtG) and a cytochrome subunit (VhtC). Heme b serves as cofactor.

The protein localises to the cell membrane. The catalysed reaction is methanophenazine + H2 = dihydromethanophenazine. Functionally, part of the F420 non-reducing hydrogenase II complex that catalyzes the reduction of methanophenazine to dihydromethanophenazine. This Methanosarcina mazei (strain ATCC BAA-159 / DSM 3647 / Goe1 / Go1 / JCM 11833 / OCM 88) (Methanosarcina frisia) protein is F420 non-reducing hydrogenase II cytochrome subunit.